The sequence spans 477 residues: UDP-N-acetylglucosamine pyrophosphorylase (477 aa).

The Substrate binding signature appears at 109–112 (MAGG). Residues 109 to 112 (MAGG), lysine 123, and glutamine 194 contribute to the UTP site. A Phosphoserine modification is found at serine 218. Position 221 (glycine 221) interacts with UTP. Asparagine 222 contributes to the substrate binding site. Residue aspartate 252 participates in UTP binding. The Substrate binding signature appears at 302-303 (EY). Residue lysine 377 coordinates UTP. Lysine 409 lines the substrate pocket. Residue serine 461 is modified to Phosphoserine.

It belongs to the UDPGP type 1 family.

It is found in the cytoplasm. It catalyses the reaction N-acetyl-alpha-D-glucosamine 1-phosphate + UTP + H(+) = UDP-N-acetyl-alpha-D-glucosamine + diphosphate. Its pathway is nucleotide-sugar biosynthesis; UDP-N-acetyl-alpha-D-glucosamine biosynthesis; UDP-N-acetyl-alpha-D-glucosamine from N-acetyl-alpha-D-glucosamine 1-phosphate: step 1/1. Functionally, UDP-N-acetylglucosamine pyrophosphorylase that utilizes N-acetylglucosamine-1-phosphate as substrate. Together with AGM1, is involved in the production of UDP-N-acetylglucosamine from N-acetylglucosamine-6-phosphate. The sequence is that of UDP-N-acetylglucosamine pyrophosphorylase (QRI1) from Saccharomyces cerevisiae (strain ATCC 204508 / S288c) (Baker's yeast).